Reading from the N-terminus, the 105-residue chain is Neuropeptide-like protein 32 (105 aa).

Positions 1-22 (MRQFNLLLVFCLIALTALPVFS) are cleaved as a signal peptide. The propeptide occupies 23-54 (FPNGLTMDSIDMEPMGAFDENGAADESPRVKR). Glycine amide is present on Gly59. Position 64 is a tryptophan amide (Trp64). 3 positions are modified to glycine amide: Gly68, Gly73, and Gly80. Trp86 carries the post-translational modification Tryptophan amide. Glycine amide occurs at positions 91 and 98. Trp103 carries the tryptophan amide modification.

Belongs to the YARP (YGGW-amide related peptide) family.

It is found in the secreted. May have antimicrobial activity. The chain is Neuropeptide-like protein 32 (nlp-32) from Caenorhabditis elegans.